The chain runs to 315 residues: Serpentine receptor class delta-31 (315 aa).

Transmembrane regions (helical) follow at residues 6–26 (LHSILSLTAVLLNAFTMYLAI), 38–58 (AIITIKTATDILTSIMSFFVM), 83–103 (ACYVGHMLMLCFLEYNLIWMI), 124–144 (VFVAFCLSIPSIIHMVVWFSI), 174–194 (ITLITQLFITAFLVIVAYIWI), 225–245 (FQVFLPSFIFLGVITFASMFT), and 256–276 (AISVIFMFSPIISPFSYILFV).

The protein belongs to the nematode receptor-like protein srd family.

The protein resides in the membrane. In Caenorhabditis elegans, this protein is Serpentine receptor class delta-31 (srd-31).